Reading from the N-terminus, the 394-residue chain is Fatty acid resistance protein FarA (394 aa).

The disordered stretch occupies residues 1–23 (MKSGNSEPNLMETHTDETKLQNT). The chain crosses the membrane as a helical span at residues 33 to 53 (ALTLLFALSAAAAGSAFFLWW). Residues 356 to 376 (SAAGAPVSKTPGAALPEMEST) form a disordered region.

Belongs to the membrane fusion protein (MFP) (TC 8.A.1) family. Probably part of a tripartite efflux system FarAB-MtrE, which is composed of an inner membrane transporter, FarB, a periplasmic membrane fusion protein, FarA, and an outer membrane component, MtrE.

It localises to the cell inner membrane. In terms of biological role, mediates resistance to long-chained antibacterial fatty acids (FAs). Function is dependent on the MtrE outer membrane protein. This is Fatty acid resistance protein FarA from Neisseria gonorrhoeae.